Reading from the N-terminus, the 239-residue chain is tRNA (guanine-N(1)-)-methyltransferase (239 aa).

S-adenosyl-L-methionine-binding positions include Gly108 and 127 to 132; that span reads LGDFVL.

This sequence belongs to the RNA methyltransferase TrmD family. Homodimer.

Its subcellular location is the cytoplasm. The enzyme catalyses guanosine(37) in tRNA + S-adenosyl-L-methionine = N(1)-methylguanosine(37) in tRNA + S-adenosyl-L-homocysteine + H(+). Functionally, specifically methylates guanosine-37 in various tRNAs. The sequence is that of tRNA (guanine-N(1)-)-methyltransferase from Streptococcus pyogenes serotype M6 (strain ATCC BAA-946 / MGAS10394).